Reading from the N-terminus, the 522-residue chain is Perilipin-1 (522 aa).

Serine 81 is subject to Phosphoserine. Threonine 85 is subject to Phosphothreonine. Serine 126, serine 130, serine 132, serine 137, and serine 174 each carry phosphoserine. Disordered regions lie at residues aspartate 195–serine 217 and leucine 287–lysine 318. Residues glutamine 291–threonine 314 show a composition bias toward acidic residues. The required for interaction with CIDEC stretch occupies residues glutamine 291 to phenylalanine 319. A phosphothreonine mark is found at threonine 299 and threonine 301. Phosphoserine is present on residues serine 382, serine 384, and serine 408. Residues glutamate 413–serine 522 form a disordered region. Basic and acidic residues predominate over residues serine 414 to alanine 435. Serine 436, serine 497, and serine 499 each carry phosphoserine.

This sequence belongs to the perilipin family. As to quaternary structure, interacts with ABHD5. Interacts with CIDEC. Interacts with AQP7. Major cAMP-dependent protein kinase-substrate in adipocytes, also dephosphorylated by PP1. When phosphorylated, may be maximally sensitive to HSL and when unphosphorylated, may play a role in the inhibition of lipolysis, by acting as a barrier in lipid droplet. As to expression, detected in adipocytes from white adipose tissue (at protein level). Detected in visceral adipose tissue and mammary gland.

It is found in the endoplasmic reticulum. Its subcellular location is the lipid droplet. In terms of biological role, modulator of adipocyte lipid metabolism. Coats lipid storage droplets to protect them from breakdown by hormone-sensitive lipase (HSL). Its absence may result in leanness. Plays a role in unilocular lipid droplet formation by activating CIDEC. Their interaction promotes lipid droplet enlargement and directional net neutral lipid transfer. May modulate lipolysis and triglyceride levels. The polypeptide is Perilipin-1 (PLIN1) (Homo sapiens (Human)).